Reading from the N-terminus, the 388-residue chain is Diacylglycerol O-acyltransferase 2 (388 aa).

The Cytoplasmic segment spans residues 1 to 69 (MKTLIAAYSG…NRSKVEKHLQ (69 aa)). The chain crosses the membrane as a helical span at residues 70-88 (VISVLQWVLSFLVLGVACS). The Lumenal segment spans residues 89-92 (VILM). Residues 93–112 (YTFCTDCWLIAALYFTWLAF) traverse the membrane as a helical segment. Topologically, residues 113–388 (DWNTPKKGGR…LPETEVLEVN (276 aa)) are cytoplasmic.

It belongs to the diacylglycerol acyltransferase family. Forms multimeric complexes consisting of several DGAT2 subunits. Interacts with SLC27A1 and this interaction is enhanced in the presence of ZFYVE1.

Its subcellular location is the endoplasmic reticulum membrane. It is found in the lipid droplet. The protein localises to the cytoplasm. The protein resides in the perinuclear region. The enzyme catalyses an acyl-CoA + a 1,2-diacyl-sn-glycerol = a triacyl-sn-glycerol + CoA. It carries out the reaction all-trans-retinol + an acyl-CoA = an all-trans-retinyl ester + CoA. The catalysed reaction is 2-(9Z-octadecenoyl)-glycerol + (9Z)-octadecenoyl-CoA = 1,2-di-(9Z-octadecenoyl)-sn-glycerol + CoA. It catalyses the reaction 1,2-di-(9Z-octadecenoyl)-sn-glycerol + (9Z)-octadecenoyl-CoA = 1,2,3-tri-(9Z-octadecenoyl)-glycerol + CoA. The enzyme catalyses all-trans-retinol + hexadecanoyl-CoA = all-trans-retinyl hexadecanoate + CoA. It carries out the reaction 1-O-(9Z-octadecenyl)-glycerol + (9Z)-octadecenoyl-CoA = 1-O-(9Z-octadecyl)-3-(9Z-octadecenoyl)-glycerol + CoA. The catalysed reaction is 1-(9Z-octadecenoyl)-glycerol + (9Z)-octadecenoyl-CoA = 1,2-di-(9Z-octadecenoyl)-glycerol + CoA. It catalyses the reaction 1,2-di-(9Z-octadecenoyl)-sn-glycerol + hexadecanoyl-CoA = 1,2-di-(9Z)-octadecenoyl-3-hexadecanoyl-sn-glycerol + CoA. The enzyme catalyses 1,3-di-(9Z-octadecenoyl)-glycerol + (9Z)-octadecenoyl-CoA = 1,2,3-tri-(9Z-octadecenoyl)-glycerol + CoA. It carries out the reaction 2,3-di-(9Z)-octadecenoyl-sn-glycerol + (9Z)-octadecenoyl-CoA = 1,2,3-tri-(9Z-octadecenoyl)-glycerol + CoA. The catalysed reaction is 2-(9Z-octadecenoyl)-glycerol + hexadecanoyl-CoA = 1-hexadecanoyl-2-(9Z-octadecenoyl)-sn-glycerol + CoA. It participates in glycerolipid metabolism; triacylglycerol biosynthesis. Its activity is regulated as follows. Inhibited by niacin. Essential acyltransferase that catalyzes the terminal and only committed step in triacylglycerol synthesis by using diacylglycerol and fatty acyl CoA as substrates. Required for synthesis and storage of intracellular triglycerides. Probably plays a central role in cytosolic lipid accumulation. In liver, is primarily responsible for incorporating endogenously synthesized fatty acids into triglycerides. Also functions as an acyl-CoA retinol acyltransferase (ARAT). Also able to use 1-monoalkylglycerol (1-MAkG) as an acyl acceptor for the synthesis of monoalkyl-monoacylglycerol (MAMAG). The polypeptide is Diacylglycerol O-acyltransferase 2 (Rattus norvegicus (Rat)).